Reading from the N-terminus, the 776-residue chain is Transferrin receptor protein 1 (776 aa).

Residues 1 to 70 (MDHARAALSN…QPQRNGKRLC (70 aa)) are Cytoplasmic-facing. The short motif at 19-22 (YTRF) is the Endocytosis signal element. At Ser23 the chain carries Phosphoserine. The S-palmitoyl cysteine moiety is linked to residue Cys70. The helical; Signal-anchor for type II membrane protein transmembrane segment at 71-91 (FLVIAAVLLLLIGFLIGYLSY) threads the bilayer. At 92-776 (RGRIELAARC…GDIWETDNEF (685 aa)) the chain is on the extracellular side. In terms of domain architecture, PA spans 230–322 (SESGSVSGKP…GTGDPYTPGF (93 aa)). N-linked (GlcNAc...) asparagine glycans are attached at residues Asn261, Asn326, and Asn391. Residues 586-776 (KGDTLENLRK…GDIWETDNEF (191 aa)) form a ligand-binding region. A Cell attachment site motif is present at residues 662-664 (RGD). Asn738 is a glycosylation site (N-linked (GlcNAc...) asparagine).

This sequence belongs to the peptidase M28 family. M28B subfamily. Homodimer; disulfide-linked. Binds one transferrin molecule per subunit. Post-translationally, stearoylated. Stearoylation does not affect iron uptake. N- and O-glycosylated, phosphorylated and palmitoylated.

Its subcellular location is the cell membrane. It localises to the melanosome. In terms of biological role, cellular uptake of iron occurs via receptor-mediated endocytosis of ligand-occupied transferrin receptor into specialized endosomes. Endosomal acidification leads to iron release. The apotransferrin-receptor complex is then recycled to the cell surface with a return to neutral pH and the concomitant loss of affinity of apotransferrin for its receptor. Transferrin receptor is necessary for development of erythrocytes and the nervous system. Acts as a lipid sensor that regulates mitochondrial fusion by regulating activation of the JNK pathway. When dietary levels of stearate (C18:0) are low, promotes activation of the JNK pathway, resulting in HUWE1-mediated ubiquitination and subsequent degradation of the mitofusin MFN2 and inhibition of mitochondrial fusion. When dietary levels of stearate (C18:0) are high, TFRC stearoylation inhibits activation of the JNK pathway and thus degradation of the mitofusin MFN2. Mediates uptake of NICOL1 into fibroblasts where it may regulate extracellular matrix production. The chain is Transferrin receptor protein 1 (TFRC) from Gallus gallus (Chicken).